Consider the following 222-residue polypeptide: 7-cyano-7-deazaguanine synthase (222 aa).

Leucine 11 to leucine 21 is an ATP binding site. The Zn(2+) site is built by cysteine 192, cysteine 200, cysteine 203, and cysteine 206.

The protein belongs to the QueC family. Requires Zn(2+) as cofactor.

The catalysed reaction is 7-carboxy-7-deazaguanine + NH4(+) + ATP = 7-cyano-7-deazaguanine + ADP + phosphate + H2O + H(+). It functions in the pathway purine metabolism; 7-cyano-7-deazaguanine biosynthesis. Functionally, catalyzes the ATP-dependent conversion of 7-carboxy-7-deazaguanine (CDG) to 7-cyano-7-deazaguanine (preQ(0)). This chain is 7-cyano-7-deazaguanine synthase, found in Sulfurihydrogenibium sp. (strain YO3AOP1).